The chain runs to 289 residues: Bifunctional protein FolD (289 aa).

NADP(+) is bound by residues 166–168 (GRS), Ser-191, and Ile-232.

It belongs to the tetrahydrofolate dehydrogenase/cyclohydrolase family. As to quaternary structure, homodimer.

It catalyses the reaction (6R)-5,10-methylene-5,6,7,8-tetrahydrofolate + NADP(+) = (6R)-5,10-methenyltetrahydrofolate + NADPH. The enzyme catalyses (6R)-5,10-methenyltetrahydrofolate + H2O = (6R)-10-formyltetrahydrofolate + H(+). Its pathway is one-carbon metabolism; tetrahydrofolate interconversion. Its function is as follows. Catalyzes the oxidation of 5,10-methylenetetrahydrofolate to 5,10-methenyltetrahydrofolate and then the hydrolysis of 5,10-methenyltetrahydrofolate to 10-formyltetrahydrofolate. The sequence is that of Bifunctional protein FolD from Synechococcus sp. (strain JA-3-3Ab) (Cyanobacteria bacterium Yellowstone A-Prime).